Reading from the N-terminus, the 396-residue chain is MMKTVNELIKDINSLTSHLHEKDFLLTWEQTPDELKQVLDVAAALKALRAENISTKVFNSGLGISVFRDNSTRTRFSYASALNLLGLAQQDLDEGKSQIAHGETVRETANMISFCADAIGIRDDMYLGAGNAYMREVGAALDDGYKQGVLPQRPALVNLQCDIDHPTQSMADLAWLREHFGSLENLKGKKIAMTWAYSPSYGKPLSVPQGIIGLMTRFGMDVTLAHPEGYDLIPDVVEVAKNNAKASGGSFRQVTSMEEAFKDADIVYPKSWAPYKVMEQRTELLRANDHEGLKALEKQCLAQNAQHKDWHCTEEMMELTRDGEALYMHCLPADISGVSCKEGEVTEGVFEKYRIATYKEASWKPYIIAAMILSRKYAKPGALLEQLLKEAQERVK.

Carbamoyl phosphate contacts are provided by residues 71–74 (STRT), glutamine 98, 165–168 (HPTQ), and 330–331 (CL).

It belongs to the aspartate/ornithine carbamoyltransferase superfamily. In terms of assembly, homotrimer.

The polypeptide is Putative carbamoyltransferase YgeW (ygeW) (Escherichia coli O157:H7).